The primary structure comprises 641 residues: Methionine--tRNA ligase (641 aa).

The 'HIGH' region motif lies at 13–23; the sequence is YYPSAKLHIGN. Residues Cys-128, Cys-131, Cys-145, and Cys-148 each contribute to the Zn(2+) site. The short motif at 298-302 is the 'KMSKS' region element; sequence KMSKS. Lys-301 contacts ATP. In terms of domain architecture, tRNA-binding spans 539–641; the sequence is DFDKIDLRVV…GELPTGSQVR (103 aa).

Belongs to the class-I aminoacyl-tRNA synthetase family. MetG type 2A subfamily. Homodimer. Requires Zn(2+) as cofactor.

The protein localises to the cytoplasm. It catalyses the reaction tRNA(Met) + L-methionine + ATP = L-methionyl-tRNA(Met) + AMP + diphosphate. In terms of biological role, is required not only for elongation of protein synthesis but also for the initiation of all mRNA translation through initiator tRNA(fMet) aminoacylation. This chain is Methionine--tRNA ligase, found in Clostridium tetani (strain Massachusetts / E88).